Reading from the N-terminus, the 415-residue chain is MMLGPEGGEGFVVKLRGLPWSCSVEDVQNFLSDCTIHDGAAGVHFIYTREGRQSGEAFVELGSEDDVKMALKKDRESMGHRYIEVFKSHRTEMDWVLKHSGPNSADSANDGFVRLRGLPFGCTKEEIVQFFSGLEIVPNGITLPVDPEGKITGEAFVQFASQELAEKALGKHKERIGHRYIEVFKSSQEEVRSYSDPPLKFMSVQRPGPYDRPGTARRYIGIVKQAGLERMRPSAYSTGYGGYEEYSGLSDGYGFTTDLFGRDLSYCLSGMYDHRYGDSEFTVQSTTGHCVHMRGLPYKATENDIYNFFSPLNPVRVHIEIGPDGRVTGEADVEFATHEEAVAAMSKDRANMQHRYIELFLNSTTGASNGAYSSQVMQGMGVSSAQATYSGLESQSVSGCYGAGYSGQNSMGGYD.

Methionine 1 is subject to N-acetylmethionine. Residue methionine 2 is modified to N-acetylmethionine; in Heterogeneous nuclear ribonucleoprotein F, N-terminally processed. The RRM 1 domain occupies 13-85 (VKLRGLPWSC…ESMGHRYIEV (73 aa)). A Glycyl lysine isopeptide (Lys-Gly) (interchain with G-Cter in SUMO) cross-link involves residue lysine 72. Positions 81–86 (RYIEVF) are interaction with RNA. Residue lysine 87 forms a Glycyl lysine isopeptide (Lys-Gly) (interchain with G-Cter in SUMO2) linkage. Serine 104, serine 107, and serine 161 each carry phosphoserine. The RRM 2 domain occupies 111 to 188 (GFVRLRGLPF…RYIEVFKSSQ (78 aa)). Lysine 167 participates in a covalent cross-link: Glycyl lysine isopeptide (Lys-Gly) (interchain with G-Cter in SUMO2). An interaction with RNA region spans residues 179-184 (RYIEVF). Lysine 185 is covalently cross-linked (Glycyl lysine isopeptide (Lys-Gly) (interchain with G-Cter in SUMO2)). 3 positions are modified to phosphoserine: serine 187, serine 193, and serine 195. Lysine 200 is subject to N6-acetyllysine; alternate. Residue lysine 200 forms a Glycyl lysine isopeptide (Lys-Gly) (interchain with G-Cter in SUMO2); alternate linkage. The residue at position 215 (threonine 215) is a Phosphothreonine. An N6-acetyllysine; alternate modification is found at lysine 224. Residue lysine 224 forms a Glycyl lysine isopeptide (Lys-Gly) (interchain with G-Cter in SUMO2); alternate linkage. Serine 265 is modified (phosphoserine). The RRM 3 domain maps to 289-366 (HCVHMRGLPY…IELFLNSTTG (78 aa)). An interaction with RNA region spans residues 355-360 (RYIELF).

As to quaternary structure, identified in the spliceosome C complex. Interacts with AGO1, AGO2, TBP and TXNL4/DIM1. Sumoylated.

Its subcellular location is the nucleus. The protein localises to the nucleoplasm. Functionally, component of the heterogeneous nuclear ribonucleoprotein (hnRNP) complexes which provide the substrate for the processing events that pre-mRNAs undergo before becoming functional, translatable mRNAs in the cytoplasm. Plays a role in the regulation of alternative splicing events. Binds G-rich sequences in pre-mRNAs and keeps target RNA in an unfolded state. The chain is Heterogeneous nuclear ribonucleoprotein F (HNRNPF) from Macaca fascicularis (Crab-eating macaque).